A 141-amino-acid chain; its full sequence is Large ribosomal subunit protein uL11 (141 aa).

It belongs to the universal ribosomal protein uL11 family. As to quaternary structure, part of the ribosomal stalk of the 50S ribosomal subunit. Interacts with L10 and the large rRNA to form the base of the stalk. L10 forms an elongated spine to which L12 dimers bind in a sequential fashion forming a multimeric L10(L12)X complex. Post-translationally, one or more lysine residues are methylated.

Its function is as follows. Forms part of the ribosomal stalk which helps the ribosome interact with GTP-bound translation factors. In Clostridium botulinum (strain Alaska E43 / Type E3), this protein is Large ribosomal subunit protein uL11.